The sequence spans 335 residues: Succinylglutamate desuccinylase (335 aa).

Residues histidine 59, glutamate 62, and histidine 151 each coordinate Zn(2+). The active site involves glutamate 215.

This sequence belongs to the AspA/AstE family. Succinylglutamate desuccinylase subfamily. The cofactor is Zn(2+).

It carries out the reaction N-succinyl-L-glutamate + H2O = L-glutamate + succinate. The protein operates within amino-acid degradation; L-arginine degradation via AST pathway; L-glutamate and succinate from L-arginine: step 5/5. Functionally, transforms N(2)-succinylglutamate into succinate and glutamate. This Pseudomonas putida (strain GB-1) protein is Succinylglutamate desuccinylase.